The following is a 283-amino-acid chain: ATP synthase gamma chain (283 aa).

Belongs to the ATPase gamma chain family. In terms of assembly, F-type ATPases have 2 components, CF(1) - the catalytic core - and CF(0) - the membrane proton channel. CF(1) has five subunits: alpha(3), beta(3), gamma(1), delta(1), epsilon(1). CF(0) has three main subunits: a, b and c.

It localises to the cell membrane. Its function is as follows. Produces ATP from ADP in the presence of a proton gradient across the membrane. The gamma chain is believed to be important in regulating ATPase activity and the flow of protons through the CF(0) complex. In Clostridium beijerinckii (strain ATCC 51743 / NCIMB 8052) (Clostridium acetobutylicum), this protein is ATP synthase gamma chain.